The primary structure comprises 711 residues: Polyribonucleotide nucleotidyltransferase (711 aa).

Residues aspartate 490 and aspartate 496 each coordinate Mg(2+). The KH domain occupies 556–615 (PRIETMQIPTDKIREVIGSGGKVIREIVEVSGAKVDINDEGIIKIASPNGEAIKKAYDMI). Residues 625-693 (GMVYTGTVVK…DRGKVRLSMK (69 aa)) form the S1 motif domain.

The protein belongs to the polyribonucleotide nucleotidyltransferase family. The cofactor is Mg(2+).

It localises to the cytoplasm. It carries out the reaction RNA(n+1) + phosphate = RNA(n) + a ribonucleoside 5'-diphosphate. In terms of biological role, involved in mRNA degradation. Catalyzes the phosphorolysis of single-stranded polyribonucleotides processively in the 3'- to 5'-direction. The chain is Polyribonucleotide nucleotidyltransferase from Roseobacter denitrificans (strain ATCC 33942 / OCh 114) (Erythrobacter sp. (strain OCh 114)).